The following is a 218-amino-acid chain: Ropporin-1-like protein (218 aa).

Residues 17–54 (PALPNMLKQFTKAAIRTQPRDVLQWAADYFSALSKGQD) form the RIIa domain. Residues 199 to 218 (QSQGGMVQPSNFTSLHTAEK) are disordered.

It belongs to the ropporin family. Component of axonemal radial spoke complexes.

It is found in the cell projection. Its subcellular location is the cilium. The protein localises to the flagellum. In terms of biological role, functions as part of axonemal radial spoke complexes that play an important part in the motility of sperm and cilia. Important for male fertility. Involved in fibrous sheath integrity and sperm motility, plays a role in PKA-dependent signaling processes required for spermatozoa capacitation. This Danio rerio (Zebrafish) protein is Ropporin-1-like protein (ropn1l).